Consider the following 182-residue polypeptide: Transcription termination/antitermination protein NusG (182 aa).

In terms of domain architecture, KOW spans 131–163 (VGEQVRIKSGPFANQVGEVQEIETDKFKLTVLV).

The protein belongs to the NusG family.

Its function is as follows. Participates in transcription elongation, termination and antitermination. In Staphylococcus aureus (strain NCTC 8325 / PS 47), this protein is Transcription termination/antitermination protein NusG.